The chain runs to 441 residues: Enolase (441 aa).

Position 163 (Gln163) interacts with (2R)-2-phosphoglycerate. Residue Glu205 is the Proton donor of the active site. Mg(2+)-binding residues include Asp242, Glu288, and Asp315. Residues Lys340, Arg369, Ser370, and Lys391 each contribute to the (2R)-2-phosphoglycerate site. The active-site Proton acceptor is Lys340.

This sequence belongs to the enolase family. Requires Mg(2+) as cofactor.

Its subcellular location is the cytoplasm. The protein resides in the secreted. The protein localises to the cell surface. It carries out the reaction (2R)-2-phosphoglycerate = phosphoenolpyruvate + H2O. The protein operates within carbohydrate degradation; glycolysis; pyruvate from D-glyceraldehyde 3-phosphate: step 4/5. Functionally, catalyzes the reversible conversion of 2-phosphoglycerate (2-PG) into phosphoenolpyruvate (PEP). It is essential for the degradation of carbohydrates via glycolysis. The chain is Enolase from Ligilactobacillus salivarius (strain UCC118) (Lactobacillus salivarius).